The chain runs to 269 residues: Malonyl-[acyl-carrier protein] O-methyltransferase (269 aa).

The protein belongs to the methyltransferase superfamily.

It catalyses the reaction malonyl-[ACP] + S-adenosyl-L-methionine = malonyl-[ACP] methyl ester + S-adenosyl-L-homocysteine. The protein operates within cofactor biosynthesis; biotin biosynthesis. Converts the free carboxyl group of a malonyl-thioester to its methyl ester by transfer of a methyl group from S-adenosyl-L-methionine (SAM). It allows to synthesize pimeloyl-ACP via the fatty acid synthetic pathway. This chain is Malonyl-[acyl-carrier protein] O-methyltransferase, found in Bacillus cereus (strain ATCC 14579 / DSM 31 / CCUG 7414 / JCM 2152 / NBRC 15305 / NCIMB 9373 / NCTC 2599 / NRRL B-3711).